The following is a 229-amino-acid chain: UPF0173 metal-dependent hydrolase RD1_1994 (229 aa).

The protein belongs to the UPF0173 family.

The chain is UPF0173 metal-dependent hydrolase RD1_1994 from Roseobacter denitrificans (strain ATCC 33942 / OCh 114) (Erythrobacter sp. (strain OCh 114)).